We begin with the raw amino-acid sequence, 217 residues long: Octanoyltransferase (217 aa).

The BPL/LPL catalytic domain maps to 32 to 207; that stretch reads SDSPDELWIV…TLSQLLGYQQ (176 aa). Residues 71 to 78, 138 to 140, and 151 to 153 each bind substrate; these read RGGQVTYH, SLG, and GLA. Cys-169 (acyl-thioester intermediate) is an active-site residue.

This sequence belongs to the LipB family.

It is found in the cytoplasm. It carries out the reaction octanoyl-[ACP] + L-lysyl-[protein] = N(6)-octanoyl-L-lysyl-[protein] + holo-[ACP] + H(+). It functions in the pathway protein modification; protein lipoylation via endogenous pathway; protein N(6)-(lipoyl)lysine from octanoyl-[acyl-carrier-protein]: step 1/2. Functionally, catalyzes the transfer of endogenously produced octanoic acid from octanoyl-acyl-carrier-protein onto the lipoyl domains of lipoate-dependent enzymes. Lipoyl-ACP can also act as a substrate although octanoyl-ACP is likely to be the physiological substrate. The protein is Octanoyltransferase of Shewanella sp. (strain MR-7).